We begin with the raw amino-acid sequence, 185 residues long: dCTP deaminase (185 aa).

DCTP contacts are provided by residues 107-112 (KSTYAR), 131-133 (TLE), Gln-152, Tyr-166, and Gln-176. The active-site Proton donor/acceptor is Glu-133.

It belongs to the dCTP deaminase family. In terms of assembly, homotrimer.

The catalysed reaction is dCTP + H2O + H(+) = dUTP + NH4(+). Its pathway is pyrimidine metabolism; dUMP biosynthesis; dUMP from dCTP (dUTP route): step 1/2. Its function is as follows. Catalyzes the deamination of dCTP to dUTP. This Anaplasma marginale (strain Florida) protein is dCTP deaminase.